A 184-amino-acid polypeptide reads, in one-letter code: Flavodoxin FldP (184 aa).

Positions 4-176 constitute a Flavodoxin-like domain; sequence AVVVYFSGYG…TVKLYAARVA (173 aa). Residues 10 to 14 and 91 to 147 each bind FMN; these read SGYGH and GFTN…SVGA.

Belongs to the FldP flavodoxin family. FMN is required as a cofactor.

Its function is as follows. Flavodoxins are low-potential electron donors to a number of redox enzymes. FldP protects the cell from oxidative stress and reactive oxygen species (ROS) damage, thereby expanding the capabilities of P.aeruginosa to thrive in hostile environments, and contributes to bacterial survival within the host. In vitro, is able to mediate ferredoxin-NADP(H) reductase (FNR)-driven cytochrome c reduction. In Pseudomonas aeruginosa (strain UCBPP-PA14), this protein is Flavodoxin FldP.